The following is a 199-amino-acid chain: Protein MM_0484 (199 aa).

In terms of domain architecture, AMMECR1 spans 5–196 (TEGRAAVKLA…EKEPDGEVIE (192 aa)).

This chain is Protein MM_0484, found in Methanosarcina mazei (strain ATCC BAA-159 / DSM 3647 / Goe1 / Go1 / JCM 11833 / OCM 88) (Methanosarcina frisia).